A 508-amino-acid chain; its full sequence is Photosystem II CP47 reaction center protein (508 aa).

6 consecutive transmembrane segments (helical) span residues 21 to 36 (SVHI…WAGS), 101 to 115 (IVFS…IWHW), 140 to 156 (GIHL…FGAF), 203 to 218 (IAAG…FHLS), 237 to 252 (VLSS…AFVV), and 457 to 472 (SFAL…HGAR).

It belongs to the PsbB/PsbC family. PsbB subfamily. In terms of assembly, PSII is composed of 1 copy each of membrane proteins PsbA, PsbB, PsbC, PsbD, PsbE, PsbF, PsbH, PsbI, PsbJ, PsbK, PsbL, PsbM, PsbT, PsbX, PsbY, PsbZ, Psb30/Ycf12, at least 3 peripheral proteins of the oxygen-evolving complex and a large number of cofactors. It forms dimeric complexes. Requires Binds multiple chlorophylls. PSII binds additional chlorophylls, carotenoids and specific lipids. as cofactor.

The protein localises to the plastid. It is found in the chloroplast thylakoid membrane. In terms of biological role, one of the components of the core complex of photosystem II (PSII). It binds chlorophyll and helps catalyze the primary light-induced photochemical processes of PSII. PSII is a light-driven water:plastoquinone oxidoreductase, using light energy to abstract electrons from H(2)O, generating O(2) and a proton gradient subsequently used for ATP formation. This Dioscorea elephantipes (Elephant's foot yam) protein is Photosystem II CP47 reaction center protein.